A 705-amino-acid chain; its full sequence is Translation factor GUF1 homolog, mitochondrial (705 aa).

Residues 1–20 (MVCHRYLLGLGASTLCLRRL) constitute a mitochondrion transit peptide. Residues 72-92 (PVEDNGTTNLTGTGEATSETG) are disordered. Residues 76–90 (NGTTNLTGTGEATSE) show a composition bias toward polar residues. The tr-type G domain maps to 105 to 288 (NRMRNFCIIA…AVVERIPPPK (184 aa)). Residues 114–121 (AHVDHGKS), 181–185 (DTPGH), and 235–238 (NKID) each bind GTP.

The protein belongs to the TRAFAC class translation factor GTPase superfamily. Classic translation factor GTPase family. LepA subfamily.

It localises to the mitochondrion inner membrane. It carries out the reaction GTP + H2O = GDP + phosphate + H(+). Functionally, promotes mitochondrial protein synthesis. May act as a fidelity factor of the translation reaction, by catalyzing a one-codon backward translocation of tRNAs on improperly translocated ribosomes. Binds to mitochondrial ribosomes in a GTP-dependent manner. The polypeptide is Translation factor GUF1 homolog, mitochondrial (Babesia bovis).